A 1058-amino-acid chain; its full sequence is MDLGPLNICEEMTILHGGFLLAEQLFHPKALAELTKSDWERVGRPIVEALREISSAAAHSQPFAWKKKALIIIWAKVLQPHPVTPSDTETRWQEDLFFSVGNMIPTINHTILFELLKSLEASGLFIQLLMALPTTICHAELERFLEHVTVDTSAEDVAFFLDVWWEVMKHKGHPQDPLLSQFSAMAHKYLPALDEFPHPPKRLRSDPDACPTMPLLAMLLRGLTQIQSRILGPGRKCCALANLADMLTVFALTEDDPQEVSATVYLDKLATVISVWNSDTQNPYHQQALAEKVKEAERDVSLTSLAKLPSETIFVGCEFLHHLLREWGEELQAVLRSSQGTSYDSYRLCDSLTSFSQNATLYLNRTSLSKEDRQVVSELAECVRDFLRKTSTVLKNRALEDITASIAMAVIQQKMDRHMEVCYIFASEKKWAFSDEWVACLGSNRALFRQPDLVLRLLETVIDVSTADRAIPESQIRQVIHLILECYADLSLPGKNKVLAGILRSWGRKGLSEKLLAYVEGFQEDLNTTFNQLTQSASEQGLAKAVASVARLVIVHPEVTVKKMCSLAVVNLGTHKFLAQILTAFPALRFVEEQGPNSSATFMVSCLKETVWMKFSTPKEEKQFLELLNCLMSPVKPQGIPVAALLEPDEVLKEFVLPFLRLDVEEVDLSLRIFIQTLEANACREEYWLQTCSPFPLLFSLCQLLDRFSKYWQLPKEKRCLSLDRKDLAIHILELLCEIVSANAETFSPDVWIKSLSWLHRKLEQLDWTVGLRLKSFFEGHFKCEVPATLFEICKLSEDEWTSQAHPGYGAGTGLLAWMECCCVSSGISERMLSLLVVDVGNPEEVRLFSKGFLVALVQVMPWCSPQEWQRLHQLTRRLLEKQLLHVPYSLEYIQFVPLLNLKPFAQELQLSVLFLRTFQFLCSHSCRDWLPLEGWNHVVKLLCGSLTRLLDSVRAIQAAGPWVQGPEQDLTQEALFVYTQVFCHALHIMAMLHPEVCEPLYVLALETLTCYETLSKTNPSVSSLLQRAHEQRFLKSIAEGIGPEERRQTLLQKMSSF.

N-acetylmethionine is present on methionine 1. At threonine 84 the chain carries Phosphothreonine. Phosphoserine is present on residues serine 86 and serine 205. A leucine-zipper region spans residues 714-735 (LPKEKRCLSLDRKDLAIHILEL).

Part of the core SMN complex that contains SMN1, GEMIN2/SIP1, DDX20/GEMIN3, GEMIN4, GEMIN5, GEMIN6, GEMIN7, GEMIN8 and STRAP/UNRIP. Part of the SMN-Sm complex that contains SMN1, GEMIN2/SIP1, DDX20/GEMIN3, GEMIN4, GEMIN5, GEMIN6, GEMIN7, GEMIN8, STRAP/UNRIP and the Sm proteins SNRPB, SNRPD1, SNRPD2, SNRPD3, SNRPE, SNRPF and SNRPG. Interacts with GEMIN3; the interaction is direct. Interacts with GEMIN5. Interacts with GEMIN8; the interaction is direct. Interacts with several snRNP SM core proteins, including SNRPB, SNRPD1, SNRPD2, SNRPD3 and SNRPE. Interacts with PPP4R2.

The protein resides in the cytoplasm. The protein localises to the nucleus. Its subcellular location is the nucleolus. It localises to the gem. The SMN complex catalyzes the assembly of small nuclear ribonucleoproteins (snRNPs), the building blocks of the spliceosome, and thereby plays an important role in the splicing of cellular pre-mRNAs. Most spliceosomal snRNPs contain a common set of Sm proteins SNRPB, SNRPD1, SNRPD2, SNRPD3, SNRPE, SNRPF and SNRPG that assemble in a heptameric protein ring on the Sm site of the small nuclear RNA to form the core snRNP (Sm core). In the cytosol, the Sm proteins SNRPD1, SNRPD2, SNRPE, SNRPF and SNRPG are trapped in an inactive 6S pICln-Sm complex by the chaperone CLNS1A that controls the assembly of the core snRNP. To assemble core snRNPs, the SMN complex accepts the trapped 5Sm proteins from CLNS1A forming an intermediate. Binding of snRNA inside 5Sm triggers eviction of the SMN complex, thereby allowing binding of SNRPD3 and SNRPB to complete assembly of the core snRNP. This chain is Gem-associated protein 4 (GEMIN4), found in Homo sapiens (Human).